Consider the following 643-residue polypeptide: Probable extracellular metalloproteinase 4 (643 aa).

The first 18 residues, 1–18 (MHGLLLAGLLALPLNVLA), serve as a signal peptide directing secretion. A propeptide spanning residues 19–254 (HPTESHSSGV…VHSVVDYVSA (236 aa)) is cleaved from the precursor. Residues 47–57 (TKSDAVPKQDG) are compositionally biased toward basic and acidic residues. The segment at 47–69 (TKSDAVPKQDGESFTTSSTGDDN) is disordered. Polar residues predominate over residues 58–69 (ESFTTSSTGDDN). N-linked (GlcNAc...) asparagine glycosylation is found at Asn271 and Asn420. Zn(2+) is bound at residue His437. Glu438 is a catalytic residue. His441 is a binding site for Zn(2+). N-linked (GlcNAc...) asparagine glycosylation is found at Asn603 and Asn629.

This sequence belongs to the peptidase M36 family. It depends on Zn(2+) as a cofactor.

It is found in the secreted. Functionally, secreted metalloproteinase probably acting as a virulence factor. The chain is Probable extracellular metalloproteinase 4 (MEP4) from Arthroderma benhamiae (strain ATCC MYA-4681 / CBS 112371) (Trichophyton mentagrophytes).